Consider the following 434-residue polypeptide: Nicotinate phosphoribosyltransferase (434 aa).

Position 242 is a phosphohistidine; by autocatalysis (His-242).

This sequence belongs to the NAPRTase family. Post-translationally, transiently phosphorylated on a His residue during the reaction cycle. Phosphorylation strongly increases the affinity for substrates and increases the rate of nicotinate D-ribonucleotide production. Dephosphorylation regenerates the low-affinity form of the enzyme, leading to product release.

It catalyses the reaction nicotinate + 5-phospho-alpha-D-ribose 1-diphosphate + ATP + H2O = nicotinate beta-D-ribonucleotide + ADP + phosphate + diphosphate. Its pathway is cofactor biosynthesis; NAD(+) biosynthesis; nicotinate D-ribonucleotide from nicotinate: step 1/1. In terms of biological role, catalyzes the synthesis of beta-nicotinate D-ribonucleotide from nicotinate and 5-phospho-D-ribose 1-phosphate at the expense of ATP. The chain is Nicotinate phosphoribosyltransferase from Bradyrhizobium sp. (strain BTAi1 / ATCC BAA-1182).